Reading from the N-terminus, the 129-residue chain is uncharacterized protein (129 aa).

The segment covering 91 to 114 (ASEKVGEMKEAASEKASEMKEAVS) has biased composition (basic and acidic residues). The interval 91 to 129 (ASEKVGEMKEAASEKASEMKEAVSEKATQAVDAVKEATK) is disordered.

Belongs to the LEA type 1 family.

This is an uncharacterized protein from Haemophilus influenzae (strain ATCC 51907 / DSM 11121 / KW20 / Rd).